A 101-amino-acid polypeptide reads, in one-letter code: Small ribosomal subunit protein bS18c (101 aa).

This sequence belongs to the bacterial ribosomal protein bS18 family. In terms of assembly, part of the 30S ribosomal subunit.

It localises to the plastid. The protein resides in the chloroplast. The sequence is that of Small ribosomal subunit protein bS18c from Vitis vinifera (Grape).